The sequence spans 500 residues: Glutelin type-B 4 (500 aa).

A signal peptide spans 1–24 (MATIAFSRLSIYFCVLLLCHGSMA). Disulfide bonds link Cys45–Cys78 and Cys121–Cys310. Cupin type-1 domains lie at 50 to 245 (LQAF…LVAK) and 316 to 465 (LNIE…EQAR). A compositionally biased stretch (polar residues) spans 481–493 (RYQQQTYPGFSNE). A disordered region spans residues 481-500 (RYQQQTYPGFSNESENEALE).

Belongs to the 11S seed storage protein (globulins) family. Hexamer; each subunit is composed of an acidic and a basic chain derived from a single precursor and linked by a disulfide bond. In terms of tissue distribution, expressed in endosperm (at protein level).

Functionally, seed storage protein. The polypeptide is Glutelin type-B 4 (GLUB4) (Oryza sativa subsp. japonica (Rice)).